The primary structure comprises 98 residues: Dehydrogenase acuH (98 aa).

Its pathway is secondary metabolite biosynthesis. Dehydrogenase; part of the gene cluster that mediates the biosynthesis of aculins. The pathway begins with the synthesis of 6-methylsalicylic acid by the polyketide synthase (PKS) acuA via condensation of acetate and malonate units. The 6-methylsalicylic acid decarboxylase acuB then catalyzes the decarboxylation of 6-methylsalicylic acid to yield m-cresol (also known as 3-methylphenol). These first reactions occur in the cytosol. The intermediate m-cresol is then transported into the endoplasmic reticulum where the cytochrome P450 monooxygenase acuC converts it to m-hydroxybenzyl alcohol, which is further converted to gentisyl alcohol by the cytochrome P450 monooxygenase acuD. Gentisyl alcohol is further oxidized by the oxidoreductase acuE that probably catalyzes hydroxylation of the aromatic ring. The aromatic system might then be opened by oxidation through a Baeyer-Villiger type of oxidation, which could be catalyzed by acuF, with the carboxylic acid at C-1 subsequently reduced to an aldehyde by acuG. Subsequently, a hemiacetal is formed, before the dehydrogenase acuH would reduce the double bond between C-4 and C-6. Finally, keto-enol tautomerism results in formation of aculinic acid, which exists as two diastereomers (both R/S configurations at C-1) by non-enzymatic hemiacetal formation. The carboxypeptidase acuI could be involved in the linking of aculinic acid to an aculene A moiety produced by the aculene biosynthesis cluster and which leads to the production of aculin A. AcuI may also be involved in the attachment of proline to aculinic acid to form epi-aculins A and B. The protein is Dehydrogenase acuH of Aspergillus aculeatus (strain ATCC 16872 / CBS 172.66 / WB 5094).